Here is a 66-residue protein sequence, read N- to C-terminus: Large ribosomal subunit protein uL29 (66 aa).

The protein belongs to the universal ribosomal protein uL29 family.

This chain is Large ribosomal subunit protein uL29, found in Deinococcus deserti (strain DSM 17065 / CIP 109153 / LMG 22923 / VCD115).